The following is a 453-amino-acid chain: UPF0210 protein Mbar_A3181 (453 aa).

It belongs to the UPF0210 family.

The chain is UPF0210 protein Mbar_A3181 from Methanosarcina barkeri (strain Fusaro / DSM 804).